The chain runs to 78 residues: Large ribosomal subunit protein bL28 (78 aa).

The interval Met-1–Arg-28 is disordered.

It belongs to the bacterial ribosomal protein bL28 family.

This Corynebacterium diphtheriae (strain ATCC 700971 / NCTC 13129 / Biotype gravis) protein is Large ribosomal subunit protein bL28.